Here is a 408-residue protein sequence, read N- to C-terminus: Imidazolonepropionase (408 aa).

Residues His-73 and His-75 each coordinate Fe(3+). Positions 73 and 75 each coordinate Zn(2+). Residues Arg-82, Tyr-145, and His-178 each contribute to the 4-imidazolone-5-propanoate site. Tyr-145 serves as a coordination point for N-formimidoyl-L-glutamate. Position 243 (His-243) interacts with Fe(3+). Residue His-243 participates in Zn(2+) binding. Gln-246 provides a ligand contact to 4-imidazolone-5-propanoate. Asp-318 serves as a coordination point for Fe(3+). Residue Asp-318 coordinates Zn(2+). Residues Asn-320 and Gly-322 each contribute to the N-formimidoyl-L-glutamate site. Position 323 (Ser-323) interacts with 4-imidazolone-5-propanoate.

It belongs to the metallo-dependent hydrolases superfamily. HutI family. Zn(2+) is required as a cofactor. Requires Fe(3+) as cofactor.

It is found in the cytoplasm. It catalyses the reaction 4-imidazolone-5-propanoate + H2O = N-formimidoyl-L-glutamate. It participates in amino-acid degradation; L-histidine degradation into L-glutamate; N-formimidoyl-L-glutamate from L-histidine: step 3/3. In terms of biological role, catalyzes the hydrolytic cleavage of the carbon-nitrogen bond in imidazolone-5-propanoate to yield N-formimidoyl-L-glutamate. It is the third step in the universal histidine degradation pathway. This Shewanella baltica (strain OS195) protein is Imidazolonepropionase.